The sequence spans 901 residues: Protein translocase subunit SecA 1 (901 aa).

ATP-binding positions include Gln89, 107-111 (GEGKT), and Asp502. Positions 856–875 (AEAKASGDARPGFVEDDPST) are disordered. Residues Cys885, Cys887, Cys896, and His897 each coordinate Zn(2+).

It belongs to the SecA family. Monomer and homodimer. Part of the essential Sec protein translocation apparatus which comprises SecA, SecYEG and auxiliary proteins SecDF-YajC and YidC. It depends on Zn(2+) as a cofactor.

It is found in the cell inner membrane. The protein resides in the cytoplasm. It catalyses the reaction ATP + H2O + cellular proteinSide 1 = ADP + phosphate + cellular proteinSide 2.. Part of the Sec protein translocase complex. Interacts with the SecYEG preprotein conducting channel. Has a central role in coupling the hydrolysis of ATP to the transfer of proteins into and across the cell membrane, serving both as a receptor for the preprotein-SecB complex and as an ATP-driven molecular motor driving the stepwise translocation of polypeptide chains across the membrane. This chain is Protein translocase subunit SecA 1, found in Ruegeria pomeroyi (strain ATCC 700808 / DSM 15171 / DSS-3) (Silicibacter pomeroyi).